Reading from the N-terminus, the 708-residue chain is Leukotoxin translocation ATP-binding protein LktB (708 aa).

A Peptidase C39 domain is found at 1–126 (MEANHQRNDL…ACYQGQLILV (126 aa)). In terms of domain architecture, ABC transmembrane type-1 spans 155-437 (FLETLIVSIF…LAQLWQDFQQ (283 aa)). 5 consecutive transmembrane segments (helical) span residues 159–179 (LIVS…FQVV), 192–212 (LNII…LSGL), 270–290 (ALTS…MWYY), 296–316 (LVIL…SPIL), and 389–409 (VMVI…LSIG). The ABC transporter domain occupies 469 to 704 (ISFKNIRFRY…SNGLYSYLHQ (236 aa)). ATP is bound at residue 503–510 (GRSGSGKS).

It belongs to the ABC transporter superfamily. Protein-1 exporter (TC 3.A.1.109) family. Homodimer.

It localises to the cell inner membrane. It carries out the reaction ATP + H2O + proteinSide 1 = ADP + phosphate + proteinSide 2.. Functionally, part of the ABC transporter complex LktBD involved in leukotoxin export. Transmembrane domains (TMD) form a pore in the inner membrane and the ATP-binding domain (NBD) is responsible for energy generation. This chain is Leukotoxin translocation ATP-binding protein LktB (lktB), found in Bibersteinia trehalosi (Pasteurella trehalosi).